Here is a 432-residue protein sequence, read N- to C-terminus: Protein arginine N-methyltransferase 2 (432 aa).

The segment covering 1–11 (MESSSECSSIS) has biased composition (low complexity). The disordered stretch occupies residues 1–22 (MESSSECSSISDFQDSTEGDDA). The region spanning 29–88 (LCMREYVVICDYVATDNTQLSLCSGDKVLLLNAVSQDWWWVNHNGTCGYVPASHLHDALN) is the SH3 domain. An SAM-dependent MTase PRMT-type domain is found at 101 to 405 (DEEYYGSYKT…FERNSVWRRH (305 aa)). Residues His-114, Arg-123, Gly-147, Glu-170, and Glu-199 each coordinate S-adenosyl-L-methionine. Active-site residues include Glu-213 and Glu-222.

This sequence belongs to the class I-like SAM-binding methyltransferase superfamily. Protein arginine N-methyltransferase family. Interacts with ctnnb1.

The protein resides in the cytoplasm. Its subcellular location is the nucleus. It carries out the reaction L-arginyl-[protein] + 2 S-adenosyl-L-methionine = N(omega),N(omega)-dimethyl-L-arginyl-[protein] + 2 S-adenosyl-L-homocysteine + 2 H(+). Its function is as follows. Arginine methyltransferase that methylates the guanidino nitrogens of arginyl residues in proteins such as histones. Involved in growth regulation. Involved in embryonic dorsal development. This chain is Protein arginine N-methyltransferase 2 (prmt2), found in Xenopus laevis (African clawed frog).